Consider the following 398-residue polypeptide: 4-hydroxy-3-methylbut-2-enyl diphosphate reductase (398 aa).

Residue Cys-66 participates in [4Fe-4S] cluster binding. Residue His-96 participates in (2E)-4-hydroxy-3-methylbut-2-enyl diphosphate binding. Dimethylallyl diphosphate is bound at residue His-96. Residue His-96 coordinates isopentenyl diphosphate. A [4Fe-4S] cluster-binding site is contributed by Cys-157. His-185 contacts (2E)-4-hydroxy-3-methylbut-2-enyl diphosphate. Position 185 (His-185) interacts with dimethylallyl diphosphate. His-185 contributes to the isopentenyl diphosphate binding site. Residue Glu-187 is the Proton donor of the active site. Thr-250 is a (2E)-4-hydroxy-3-methylbut-2-enyl diphosphate binding site. Cys-288 lines the [4Fe-4S] cluster pocket. Positions 317, 318, 319, and 380 each coordinate (2E)-4-hydroxy-3-methylbut-2-enyl diphosphate. Dimethylallyl diphosphate contacts are provided by Ser-317, Ser-318, Asn-319, and Ser-380. The isopentenyl diphosphate site is built by Ser-317, Ser-318, Asn-319, and Ser-380.

The protein belongs to the IspH family. The cofactor is [4Fe-4S] cluster.

It carries out the reaction isopentenyl diphosphate + 2 oxidized [2Fe-2S]-[ferredoxin] + H2O = (2E)-4-hydroxy-3-methylbut-2-enyl diphosphate + 2 reduced [2Fe-2S]-[ferredoxin] + 2 H(+). The enzyme catalyses dimethylallyl diphosphate + 2 oxidized [2Fe-2S]-[ferredoxin] + H2O = (2E)-4-hydroxy-3-methylbut-2-enyl diphosphate + 2 reduced [2Fe-2S]-[ferredoxin] + 2 H(+). Its pathway is isoprenoid biosynthesis; dimethylallyl diphosphate biosynthesis; dimethylallyl diphosphate from (2E)-4-hydroxy-3-methylbutenyl diphosphate: step 1/1. The protein operates within isoprenoid biosynthesis; isopentenyl diphosphate biosynthesis via DXP pathway; isopentenyl diphosphate from 1-deoxy-D-xylulose 5-phosphate: step 6/6. Its function is as follows. Catalyzes the conversion of 1-hydroxy-2-methyl-2-(E)-butenyl 4-diphosphate (HMBPP) into a mixture of isopentenyl diphosphate (IPP) and dimethylallyl diphosphate (DMAPP). Acts in the terminal step of the DOXP/MEP pathway for isoprenoid precursor biosynthesis. In Prochlorococcus marinus (strain MIT 9301), this protein is 4-hydroxy-3-methylbut-2-enyl diphosphate reductase.